A 194-amino-acid chain; its full sequence is UPF0232 protein in recF-gyrB intergenic region (194 aa).

The segment covering 1–14 (MTGPFDDDGPEEDA) has biased composition (acidic residues). The interval 1–81 (MTGPFDDDGP…GPGPDARDPQ (81 aa)) is disordered. A compositionally biased stretch (basic and acidic residues) spans 30-52 (DLVRRTLEEARGAARSQGKDVGR).

The protein belongs to the UPF0232 family.

In Mycolicibacterium smegmatis (Mycobacterium smegmatis), this protein is UPF0232 protein in recF-gyrB intergenic region.